A 179-amino-acid chain; its full sequence is Probable chorismate pyruvate-lyase (179 aa).

3 residues coordinate substrate: Arg82, Leu120, and Glu165.

The protein belongs to the UbiC family.

Its subcellular location is the cytoplasm. The catalysed reaction is chorismate = 4-hydroxybenzoate + pyruvate. It participates in cofactor biosynthesis; ubiquinone biosynthesis. Its function is as follows. Removes the pyruvyl group from chorismate, with concomitant aromatization of the ring, to provide 4-hydroxybenzoate (4HB) for the ubiquinone pathway. This chain is Probable chorismate pyruvate-lyase, found in Vibrio cholerae serotype O1 (strain ATCC 39315 / El Tor Inaba N16961).